Consider the following 151-residue polypeptide: SsrA-binding protein (151 aa).

The protein belongs to the SmpB family.

It localises to the cytoplasm. Its function is as follows. Required for rescue of stalled ribosomes mediated by trans-translation. Binds to transfer-messenger RNA (tmRNA), required for stable association of tmRNA with ribosomes. tmRNA and SmpB together mimic tRNA shape, replacing the anticodon stem-loop with SmpB. tmRNA is encoded by the ssrA gene; the 2 termini fold to resemble tRNA(Ala) and it encodes a 'tag peptide', a short internal open reading frame. During trans-translation Ala-aminoacylated tmRNA acts like a tRNA, entering the A-site of stalled ribosomes, displacing the stalled mRNA. The ribosome then switches to translate the ORF on the tmRNA; the nascent peptide is terminated with the 'tag peptide' encoded by the tmRNA and targeted for degradation. The ribosome is freed to recommence translation, which seems to be the essential function of trans-translation. This is SsrA-binding protein from Campylobacter concisus (strain 13826).